The chain runs to 90 residues: Barrier-to-autointegration factor-like protein (90 aa).

It belongs to the BAF family. Homodimer. Heterodimerizes with BANF1. As to expression, expressed strongly in testis and pancreas. Also detected in brain, colon, liver, lung, ovary, placenta, prostate, small intestine, spleen and thymus. Not detected in heart, kidney and skeletal muscle.

The protein resides in the nucleus. Its subcellular location is the cytoplasm. Functionally, may play a role in BANF1 regulation and influence tissue-specific roles of BANF1. The sequence is that of Barrier-to-autointegration factor-like protein (BANF2) from Homo sapiens (Human).